The following is a 69-amino-acid chain: Putative membrane protein insertion efficiency factor (69 aa).

It belongs to the UPF0161 family.

It is found in the cell inner membrane. Its function is as follows. Could be involved in insertion of integral membrane proteins into the membrane. The sequence is that of Putative membrane protein insertion efficiency factor from Laribacter hongkongensis (strain HLHK9).